Reading from the N-terminus, the 787-residue chain is Integrin beta-6 (787 aa).

The signal sequence occupies residues 1 to 21 (MGIELVCLFLLLLGRNDHVQG). Residues 22–71 (GCAWGGAESCSDCLLTGPHCAWCSQENFTHLSGAGERCDTPANLLAKGCQ) enclose the PSI domain. Over 22–708 (GCAWGGAESC…KDCPKPPNIP (687 aa)) the chain is Extracellular. 19 disulfides stabilise this stretch: Cys-23-Cys-41, Cys-31-Cys-454, Cys-34-Cys-59, Cys-44-Cys-70, Cys-197-Cys-204, Cys-252-Cys-293, Cys-394-Cys-406, Cys-426-Cys-452, Cys-456-Cys-476, Cys-467-Cys-479, Cys-481-Cys-490, Cys-492-Cys-519, Cys-502-Cys-517, Cys-511-Cys-522, Cys-524-Cys-537, Cys-539-Cys-560, Cys-544-Cys-558, Cys-552-Cys-563, and Cys-565-Cys-574. 2 N-linked (GlcNAc...) asparagine glycosylation sites follow: Asn-48 and Asn-97. Positions 131 to 371 (YPVDLYYLMD…QLIISAYEEL (241 aa)) constitute a VWFA domain. Mg(2+) is bound by residues Asp-140, Ser-142, and Ser-144. The Ca(2+) site is built by Ser-144, Asp-147, Asp-148, and Glu-179. Ca(2+) contacts are provided by Asn-235, Asp-237, Pro-239, and Glu-240. Glu-240 is a binding site for Mg(2+). Asn-260 is a glycosylation site (N-linked (GlcNAc...) asparagine). The Ca(2+) site is built by Asp-271 and Lys-355. Asn-387 carries N-linked (GlcNAc...) asparagine glycosylation. Residue Asn-418 is glycosylated (N-linked (GlcNAc...) asparagine). 4 I-EGF domains span residues 456 to 491 (CQRE…PHCE), 492 to 538 (CGED…PYCQ), 539 to 575 (CDNF…EYCN), and 576 to 615 (CTTN…PTCE). Residues Asn-463 and Asn-471 are each glycosylated (N-linked (GlcNAc...) asparagine). Asn-541 carries an N-linked (GlcNAc...) asparagine glycan. Asn-575 carries N-linked (GlcNAc...) asparagine glycosylation. Cystine bridges form between Cys-576–Cys-599, Cys-583–Cys-597, Cys-591–Cys-602, Cys-604–Cys-614, Cys-617–Cys-620, Cys-624–Cys-669, Cys-630–Cys-649, Cys-633–Cys-645, and Cys-677–Cys-701. The chain crosses the membrane as a helical span at residues 709-729 (MIMLGVSLAILLIGVVLLCIW). The tract at residues 730-757 (KLLVSFHDRKEVAKFEAERSKAKWQTGT) is interaction with HAX1. Residues 730–787 (KLLVSFHDRKEVAKFEAERSKAKWQTGTNPLYRGSTSTFKNVTYKHREKHKAGLSSDG) are Cytoplasmic-facing.

The protein belongs to the integrin beta chain family. Heterodimer of an alpha and a beta subunit. Interacts with FLNB. Interacts with HAX1. ITGAV:ITGB6 interacts with FBN1. ITGAV:ITGB6 interacts with TGFB1.

It is found in the cell membrane. Its subcellular location is the cell junction. The protein resides in the focal adhesion. Functionally, integrin alpha-V:beta-6 (ITGAV:ITGB6) is a receptor for fibronectin and cytotactin. It recognizes the sequence R-G-D in its ligands. ITGAV:ITGB6 acts as a receptor for fibrillin-1 (FBN1) and mediates R-G-D-dependent cell adhesion to FBN1. Integrin alpha-V:beta-6 (ITGAV:ITGB6) mediates R-G-D-dependent release of transforming growth factor beta-1 (TGF-beta-1) from regulatory Latency-associated peptide (LAP), thereby playing a key role in TGF-beta-1 activation. The sequence is that of Integrin beta-6 (Itgb6) from Mus musculus (Mouse).